The chain runs to 413 residues: Gamma-glutamyl phosphate reductase (413 aa).

Belongs to the gamma-glutamyl phosphate reductase family.

The protein resides in the cytoplasm. The enzyme catalyses L-glutamate 5-semialdehyde + phosphate + NADP(+) = L-glutamyl 5-phosphate + NADPH + H(+). It functions in the pathway amino-acid biosynthesis; L-proline biosynthesis; L-glutamate 5-semialdehyde from L-glutamate: step 2/2. Catalyzes the NADPH-dependent reduction of L-glutamate 5-phosphate into L-glutamate 5-semialdehyde and phosphate. The product spontaneously undergoes cyclization to form 1-pyrroline-5-carboxylate. The chain is Gamma-glutamyl phosphate reductase from Thermus thermophilus (strain ATCC 27634 / DSM 579 / HB8).